The chain runs to 185 residues: Elongation factor P (185 aa).

It belongs to the elongation factor P family.

It localises to the cytoplasm. It participates in protein biosynthesis; polypeptide chain elongation. Its function is as follows. Involved in peptide bond synthesis. Stimulates efficient translation and peptide-bond synthesis on native or reconstituted 70S ribosomes in vitro. Probably functions indirectly by altering the affinity of the ribosome for aminoacyl-tRNA, thus increasing their reactivity as acceptors for peptidyl transferase. This Mesoplasma florum (strain ATCC 33453 / NBRC 100688 / NCTC 11704 / L1) (Acholeplasma florum) protein is Elongation factor P.